A 1155-amino-acid chain; its full sequence is ATP-dependent helicase/deoxyribonuclease subunit B (1155 aa).

ATP is bound at residue 8–15 (GRSGSGKS). [4Fe-4S] cluster-binding residues include Cys793, Cys1115, Cys1118, and Cys1124.

It belongs to the helicase family. AddB/RexB type 1 subfamily. Heterodimer of AddA and AddB. It depends on Mg(2+) as a cofactor. [4Fe-4S] cluster is required as a cofactor.

In terms of biological role, the heterodimer acts as both an ATP-dependent DNA helicase and an ATP-dependent, dual-direction single-stranded exonuclease. Recognizes the chi site generating a DNA molecule suitable for the initiation of homologous recombination. The AddB subunit has 5' -&gt; 3' nuclease activity but not helicase activity. The sequence is that of ATP-dependent helicase/deoxyribonuclease subunit B from Clostridioides difficile (strain 630) (Peptoclostridium difficile).